The primary structure comprises 704 residues: Polyribonucleotide nucleotidyltransferase (704 aa).

Mg(2+) is bound by residues aspartate 487 and aspartate 493. The region spanning 554-613 (PRLLTIKIHPDKIREVIGKGGSTIQAITKETGTQIDIQDDGTIIIASVNAIAAQAAKSRI) is the KH domain. Residues 623-691 (GRIYEGKVAK…KQGRIRLSIK (69 aa)) form the S1 motif domain.

It belongs to the polyribonucleotide nucleotidyltransferase family. Component of the RNA degradosome, which is a multiprotein complex involved in RNA processing and mRNA degradation. The cofactor is Mg(2+).

It is found in the cytoplasm. The catalysed reaction is RNA(n+1) + phosphate = RNA(n) + a ribonucleoside 5'-diphosphate. Its function is as follows. Involved in mRNA degradation. Catalyzes the phosphorolysis of single-stranded polyribonucleotides processively in the 3'- to 5'-direction. The sequence is that of Polyribonucleotide nucleotidyltransferase from Xanthomonas oryzae pv. oryzae (strain MAFF 311018).